The primary structure comprises 463 residues: A-type ATP synthase subunit B (463 aa).

This sequence belongs to the ATPase alpha/beta chains family. As to quaternary structure, has multiple subunits with at least A(3), B(3), C, D, E, F, H, I and proteolipid K(x).

The protein resides in the cell membrane. Its function is as follows. Component of the A-type ATP synthase that produces ATP from ADP in the presence of a proton gradient across the membrane. The B chain is a regulatory subunit. The polypeptide is A-type ATP synthase subunit B (Methanothermobacter thermautotrophicus (strain ATCC 29096 / DSM 1053 / JCM 10044 / NBRC 100330 / Delta H) (Methanobacterium thermoautotrophicum)).